Consider the following 292-residue polypeptide: Probable ABC transporter phosphonate/phosphite binding protein PhnD2 (292 aa).

The first 20 residues, 1–20 (MKLKSLLSVFTISIVALTSA), serve as a signal peptide directing secretion. C21 is lipidated: N-palmitoyl cysteine. C21 is lipidated: S-diacylglycerol cysteine.

This sequence belongs to the phosphate/phosphite/phosphonate binding protein family. In terms of assembly, the complex may be composed of two ATP-binding proteins (PhnC2), two transmembrane proteins (PhnE2) and a solute-binding protein (PhnD2).

It is found in the cell membrane. Probably part of the ABC transporter complex PhnC2D2E2. Binds strongly to methylphosphonate (MPn), ethylphosphonate (EPn) and inorganic phosphite. This is Probable ABC transporter phosphonate/phosphite binding protein PhnD2 from Prochlorococcus marinus (strain MIT 9301).